The chain runs to 301 residues: MSIDKSYCGFIAIVGRPNVGKSTLLNKLLGQKISITSRKAQTTRHRIVGIHTEGAYQAIYVDTPGLHMEEKRAINRLMNKAASSSIGDVELVIFVVEGTRWTPDDEMVLNKLREGKAPVILAVNKVDNVQEKADLLPHLQFLASQMNFLDIVPISAETGLNVDTIAAIVRKHLPEATHHFPEDYITDRSQRFMASEIIREKLMRFLGAELPYSVTVEIERFVSNERGGCDINGLILVEREGQKKMVIGNKGAKIKTIGIEARKDMQEMFEAPVHLELWVKVKSGWADDERALRSLGYVDDL.

The region spanning 7–175 (YCGFIAIVGR…AAIVRKHLPE (169 aa)) is the Era-type G domain. A G1 region spans residues 15-22 (GRPNVGKS). 15–22 (GRPNVGKS) lines the GTP pocket. The G2 stretch occupies residues 41 to 45 (QTTRH). The tract at residues 62 to 65 (DTPG) is G3. GTP-binding positions include 62 to 66 (DTPGL) and 124 to 127 (NKVD). The segment at 124 to 127 (NKVD) is G4. The tract at residues 154 to 156 (ISA) is G5. Residues 206–283 (LGAELPYSVT…HLELWVKVKS (78 aa)) enclose the KH type-2 domain.

This sequence belongs to the TRAFAC class TrmE-Era-EngA-EngB-Septin-like GTPase superfamily. Era GTPase family. Monomer.

The protein localises to the cytoplasm. Its subcellular location is the cell inner membrane. Its function is as follows. An essential GTPase that binds both GDP and GTP, with rapid nucleotide exchange. Plays a role in 16S rRNA processing and 30S ribosomal subunit biogenesis and possibly also in cell cycle regulation and energy metabolism. The polypeptide is GTPase Era (Shigella flexneri).